The chain runs to 6781 residues: Replicase polyprotein 1ab (6781 aa).

The CoV Nsp1 globular domain maps to Ala2–Gly109. Positions 59, 95, 99, and 102 each coordinate ssDNA. Positions Ile112–Gly364 constitute a CoV Nsp2 N-terminal domain. The 394-residue stretch at Ser383–Thr776 folds into the CoV Nsp2 middle domain. Residues Val778–Gly895 form the CoV Nsp2 C-terminal domain. The Ubiquitin-like 1 domain maps to Gly896–Asp991. Positions Ile1009–Ala1040 are disordered. The Peptidase C16 1 domain occupies Ser1057 to Tyr1296. Catalysis depends on Cys1091, which acts as the For PL1-PRO activity. A C4-type 1; degenerate zinc finger spans residues Cys1162–Cys1193. Catalysis depends on for PL1-PRO activity residues His1239 and Asp1252. Positions Lys1297–Thr1465 constitute a Macro domain. A Ubiquitin-like 2 domain is found at Asn1630–Pro1685. One can recognise a Peptidase C16 2 domain in the interval Ser1691–Glu1951. Cys1729 functions as the For PL2-PRO activity in the catalytic mechanism. The C4-type 2; degenerate zinc-finger motif lies at Asp1808 to His1838. Catalysis depends on for PL2-PRO activity residues His1888 and Asp1901. The next 2 membrane-spanning stretches (helical) occupy residues Phe1959 to Phe1979 and Trp2022 to Met2042. The segment at Phe1959–Ile2170 is HD1. Positions Ala2038 to Asp2102 constitute a 3Ecto domain. Disulfide bonds link Cys2054–Cys2080 and Cys2072–Cys2077. Transmembrane regions (helical) follow at residues Ile2105–Val2125, Ala2127–Gln2147, and Ile2150–Ile2170. The tract at residues Met2176–Gly2266 is Y1. In terms of domain architecture, CoV Nsp3 Y spans Met2176 to Gly2516. The Zn(2+) site is built by His2180, Cys2185, Cys2190, Cys2193, Cys2226, His2229, Cys2233, and Cys2236. Positions His2180–Cys2193 are ZF1. The tract at residues Cys2226–Cys2236 is ZF2. Positions Pro2267–Leu2356 are Y2. Residues Pro2267–Gly2516 are coV-Y. Residues Ser2357–Asp2414 are Y3. Positions Val2415 to Gly2516 are Y4. Helical transmembrane passes span Phe2528 to Phe2548, Ile2619 to Gly2639, Gly2654 to Tyr2674, Gly2754 to Phe2774, Ile2787 to Phe2807, Met2814 to Val2834, and Leu2863 to Phe2883. Residues Phe2528–Phe2883 are HD2. One can recognise a Nsp4C domain in the interval Leu2902–Gln2997. In terms of domain architecture, Peptidase C30 spans Ala2998–Gln3299. Residues His3038 and Cys3141 each act as for 3CL-PRO activity in the active site. 7 helical membrane passes run Gly3336 to Leu3356, Leu3361 to Phe3381, Leu3399 to Leu3419, Pro3431 to Ala3451, Ile3454 to Val3474, Tyr3476 to Ile3496, and Met3500 to Phe3520. Residues Gly3336–Phe3520 form an HD3 region. In terms of domain architecture, RdRp Nsp7 cofactor spans Ser3580–Gln3662. One can recognise a RdRp Nsp8 cofactor domain in the interval Ser3663–Gln3857. Positions Asn3858–Gln3965 constitute a Nsp9 ssRNA-binding domain. One can recognise an ExoN/MTase coactivator domain in the interval Ala3966–Asp4103. Cys4039, Cys4042, His4048, Cys4055, Cys4081, Cys4084, Cys4092, and Cys4094 together coordinate Zn(2+). Zinc fingers lie at residues Cys4039–Cys4055 and Cys4081–Cys4094. The 250-residue stretch at Tyr4106–Ile4355 folds into the NiRAN domain. One can recognise a Nsp12 Interface domain in the interval Lys4361–Ser4459. Zn(2+)-binding residues include His4390, Cys4396, Cys4401, Cys4405, and Cys4582. In terms of domain architecture, Nsp12 RNA-dependent RNA polymerase spans Arg4460 to Gln5027. The interval Ser4462 to Asn4676 is rdRp Fingers N-ter. Residues Thr4677 to Pro4715 form a rdRp Palm N-ter region. The region spanning Pro4707–Gly4869 is the RdRp catalytic domain. The interval Lys4716–Gly4774 is rdRp Fingers C-ter. Residues His4737, Cys4740, and Cys4741 each coordinate Zn(2+). The rdRp Palm C-ter stretch occupies residues Thr4775–Gln4910. Residues Ser4854, Asp4855, and Asp4856 each act as for RNA-directed RNA polymerase activity in the active site. The interval His4911–Gln5027 is rdRp Thumb. The CV ZBD domain occupies Ser5028–Asp5140. Zn(2+) contacts are provided by Cys5032, Cys5035, Cys5043, Cys5046, Cys5053, Cys5056, His5060, His5066, Cys5077, Cys5082, Cys5099, and His5102. The (+)RNA virus helicase ATP-binding domain maps to Ser5275–Leu5466. ATP is bound at residue Gly5310–Ser5317. The (+)RNA virus helicase C-terminal domain maps to His5467–Ser5636. The 215-residue stretch at Leu5696 to Val5910 folds into the ExoN domain. Active-site for exoribonuclease activity residues include Asp5714, Glu5716, and Glu5815. Residues Cys5831, Cys5833, Cys5849, His5852, His5880, Cys5884, and His5887 each contribute to the Zn(2+) site. Residues His5891 and Asp5896 each act as for exoribonuclease activity in the active site. A Zn(2+)-binding site is contributed by Cys5902. Positions Tyr5919–Leu6140 constitute an N7-MTase domain. Asp5954–Gly5960 is a binding site for S-adenosyl-L-methionine. Residues Cys6031–Thr6045 form a gpppA-binding region. Residues Cys6069, Cys6086, Cys6097, and His6100 each contribute to the Zn(2+) site. Positions Gly6142–Arg6202 constitute a Nsp15 N-terminal oligomerization domain. An AV-Nsp11N/CoV-Nsp15M domain is found at Lys6203 to Glu6320. The NendoU domain occupies Ser6337–Pro6477. Catalysis depends on for uridylate-specific endoribonuclease activity residues His6367, His6382, and Lys6423. One can recognise a Nidovirus-type SAM-dependent 2'-O-MTase domain in the interval Ala6481–Val6777. Catalysis depends on for 2'-O-methyltransferase residues Lys6525, Asp6609, Lys6649, and Glu6682.

It belongs to the coronaviruses polyprotein 1ab family. In terms of assembly, interacts with PL-PRO and nsp6. As to quaternary structure, monomer. Homodimer; disulfide-linked. Interacts with nsp8 and nsp12 to form the replication-transcription complex (RTC): nsp12, nsp7, two subunits of nsp8, and up to two subunits of nsp13. Eight copies of nsp7 and eight copies of nsp8 assemble to form a heterohexadecamer dsRNA-encircling ring structure. In terms of assembly, interacts with nsp7, nsp13 and nsp12 to form the replication-transcription complex (RTC): nsp12, nsp7, two subunits of nsp8, and up to two subunits of nsp13. Eight copies of nsp7 and eight copies of nsp8 assemble to form a heterohexadecamer dsRNA-encircling ring structure. As to quaternary structure, homodimer. Forms a dodecamer and interacts with nsp14 and nsp16; these interactions enhance nsp14 and nsp16 enzymatic activities. Mn(2+) serves as cofactor. In terms of processing, specific enzymatic cleavages in vivo by its own proteases yield mature proteins. 3CL-PRO and PL-PRO proteinases are autocatalytically processed.

It is found in the host cytoplasm. It localises to the host nucleus. The protein localises to the host membrane. Its subcellular location is the host perinuclear region. The protein resides in the host endoplasmic reticulum. It is found in the host endoplasmic reticulum-Golgi intermediate compartment. The enzyme catalyses Thiol-dependent hydrolysis of ester, thioester, amide, peptide and isopeptide bonds formed by the C-terminal Gly of ubiquitin (a 76-residue protein attached to proteins as an intracellular targeting signal).. It carries out the reaction a 5'-end diphospho-ribonucleoside in mRNA + GTP + H(+) = a 5'-end (5'-triphosphoguanosine)-ribonucleoside in mRNA + diphosphate. It catalyses the reaction RNA(n) + a ribonucleoside 5'-triphosphate = RNA(n+1) + diphosphate. The catalysed reaction is ATP + H2O = ADP + phosphate + H(+). The enzyme catalyses a 5'-end (5'-triphosphoguanosine)-ribonucleoside in mRNA + S-adenosyl-L-methionine = a 5'-end (N(7)-methyl 5'-triphosphoguanosine)-ribonucleoside in mRNA + S-adenosyl-L-homocysteine. It carries out the reaction uridylyl-uridylyl-ribonucleotide-RNA = a 3'-end uridylyl-2',3'-cyclophospho-uridine-RNA + a 5'-end dephospho-ribonucleoside-RNA. It catalyses the reaction a 5'-end (N(7)-methyl 5'-triphosphoguanosine)-ribonucleoside in mRNA + S-adenosyl-L-methionine = a 5'-end (N(7)-methyl 5'-triphosphoguanosine)-(2'-O-methyl-ribonucleoside) in mRNA + S-adenosyl-L-homocysteine + H(+). Inhibited by the substrate-analog Cbz-Val-Asn-Ser-Thr-Leu-Gln-CMK. Inhibited by (R)-16. In terms of biological role, multifunctional protein responsible for the transcription of negative stranded RNA, leader RNA, subgenomic mRNAs and progeny virion RNA as well as proteinases responsible for the cleavage of the polyprotein into functional products. Plays a role in the inhibition of host interferon and pro-inflammatory cytokines production. Suppresses host RELA/p65 activation by blocking NFKBIA phosphorylation. Targets also the RLR pathway downstream of the IRF3 activation by targeting host CREBBP to proteasomal degradation. Functionally, responsible for the cleavages located at the N-terminus of the replicase polyprotein. Participates together with nsp4 in the assembly of virally-induced cytoplasmic double-membrane vesicles necessary for viral replication. Forms a molecular pore spanning the double membrane of the coronavirus replication organelle. In addition, PLP2 possesses a deubiquitinating/deISGylating activity and processes both 'Lys-48'- and 'Lys-63'-linked polyubiquitin chains from cellular substrates. PLP2 also antagonizes innate immune induction of type I interferon by blocking the nuclear translocation of host IRF-3. Participates in the inhibition of the integrated stress response (ISR) in the infected host cell. Its function is as follows. Participates in the assembly of virally-induced cytoplasmic double-membrane vesicles necessary for viral replication. In terms of biological role, responsible for the majority of cleavages as it cleaves the C-terminus of replicase polyprotein at 11 sites. Recognizes substrates containing the core sequence [ILMVF]-Q-|-[SGACN]. Also contains an ADP-ribose-1''-phosphate (ADRP)-binding function. Participates in the inhibition of the integrated stress response (ISR) in the infected host cell. Plays a role in the initial induction of autophagosomes from host endoplasmic reticulum. Later, limits the expansion of these phagosomes that are no longer able to deliver viral components to lysosomes. Functionally, plays a role in viral RNA synthesis. Forms a hexadecamer with nsp8 (8 subunits of each) that may participate in viral replication by acting as a primase. Alternatively, may synthesize substantially longer products than oligonucleotide primers. Its function is as follows. Plays a role in viral RNA synthesis. Forms a hexadecamer with nsp7 (8 subunits of each) that may participate in viral replication by acting as a primase. Alternatively, may synthesize substantially longer products than oligonucleotide primers. In terms of biological role, forms a primer, NSP9-pU, which is utilized by the polymerase for the initiation of RNA chains. Interacts with ribosome signal recognition particle RNA (SRP). Together with NSP8, suppress protein integration into the cell membrane, thereby disrupting host immune defenses. Plays a pivotal role in viral transcription by stimulating both nsp14 3'-5' exoribonuclease and nsp16 2'-O-methyltransferase activities. Therefore plays an essential role in viral mRNAs cap methylation. Functionally, RNA-directed RNA polymerase that catalyzes the transcription of viral genomic and subgenomic RNAs. Acts in complex with nsp7 and nsp8 to transcribe both the minus and positive strands of genomic RNA. The kinase-like NiRAN domain of NSP12 attaches one or more nucleotides to the amino terminus of NSP9, forming a covalent RNA-protein intermediate that serves as transcription/replication primer. Subgenomic RNAs (sgRNAs) are formed by discontinuous transcription: The polymerase has the ability to pause at transcription-regulating sequences (TRS) and jump to the leader TRS, resulting in a major deletion. This creates a series of subgenomic RNAs that are replicated, transcribed and translated. In addition, Nsp12 is a subunit of the viral RNA capping enzyme that catalyzes the RNA guanylyltransferase reaction for genomic and sub-genomic RNAs. Subsequently, the NiRAN domain transfers RNA to GDP, and forms the core cap structure GpppA-RNA. Its function is as follows. Plays a role in viral RNA synthesis. Multi-functional protein with a zinc-binding domain in N-terminus displaying RNA and DNA duplex-unwinding activities with 5' to 3' polarity. ATPase activity is strongly stimulated by poly(U), poly(dT), poly(C), poly(dA), but not by poly(G). In terms of biological role, plays a role in viral RNA synthesis through two distinct activities. The N7-guanine methyltransferase activity plays a role in the formation of the cap structure GpppA-RNA. The proofreading exoribonuclease reduces the sensitivity of the virus to RNA mutagens during replication. This activity acts on both ssRNA and dsRNA in a 3'-5' direction. Plays a role in viral transcription/replication and prevents the simultaneous activation of host cell dsRNA sensors, such as MDA5/IFIH1, OAS, and PKR. Acts by degrading the 5'-polyuridines generated during replication of the poly(A) region of viral genomic and subgenomic RNAs. Catalyzes a two-step reaction in which a 2'3'-cyclic phosphate (2'3'-cP) is first generated by 2'-O transesterification, which is then hydrolyzed to a 3'-phosphate (3'-P). If not degraded, poly(U) RNA would hybridize with poly(A) RNA tails and activate host dsRNA sensors. Decreases the RNA levels and thus the expression of host TBK1 and IRF3, antagonizing the host innate response. The protein is Replicase polyprotein 1ab (rep) of Sus scrofa (Pig).